The sequence spans 263 residues: Alpha-tubulin N-acetyltransferase 2 (263 aa).

Residues methionine 1–phenylalanine 181 enclose the N-acetyltransferase domain. Acetyl-CoA is bound at residue phenylalanine 115–phenylalanine 128. Disordered stretches follow at residues threonine 191 to arginine 223 and glutamate 242 to tryptophan 263. Residues arginine 200–arginine 212 show a composition bias toward low complexity. The span at asparagine 253–tryptophan 263 shows a compositional bias: basic and acidic residues.

This sequence belongs to the acetyltransferase ATAT1 family. Expressed in touch receptor neurons and in a subset of ciliated neurons, including PDE, ADE, CEP, and OLQ neurons.

It catalyses the reaction L-lysyl-[alpha-tubulin] + acetyl-CoA = N(6)-acetyl-L-lysyl-[alpha-tubulin] + CoA + H(+). Its function is as follows. Specifically acetylates 'Lys-40' in alpha-tubulin/mec-12 on the lumenal side of microtubules. Promotes microtubule destabilization and accelerates microtubule dynamics; this activity may be independent of acetylation activity. Acetylates alpha-tubulin with a slow enzymatic rate, due to a catalytic site that is not optimized for acetyl transfer. Enters the microtubule through each end and diffuses quickly throughout the lumen of microtubules. Acetylates only long/old microtubules because of its slow acetylation rate since it does not have time to act on dynamically unstable microtubules before the enzyme is released. Required for the maintenance of touch receptor neurons and possibly other type of neurons involved in locomotion. In Caenorhabditis elegans, this protein is Alpha-tubulin N-acetyltransferase 2 (atat-2).